Reading from the N-terminus, the 139-residue chain is MAQLTVQIVTPDGLVYDHHASYVSVRTLDGEMGILPRHENMIAVLAVDEVKVKRIDDKDHVNWIAVNGGVIEIANDMITIVADSAERARDIDISRAERAKLRAERAIEEAQDKHLIDQERRAKIALQRAINRINVGNRL.

The protein belongs to the ATPase epsilon chain family. In terms of assembly, F-type ATPases have 2 components, CF(1) - the catalytic core - and CF(0) - the membrane proton channel. CF(1) has five subunits: alpha(3), beta(3), gamma(1), delta(1), epsilon(1). CF(0) has three main subunits: a, b and c.

Its subcellular location is the cell membrane. Functionally, produces ATP from ADP in the presence of a proton gradient across the membrane. The sequence is that of ATP synthase epsilon chain from Streptococcus pneumoniae serotype 2 (strain D39 / NCTC 7466).